Reading from the N-terminus, the 780-residue chain is Copper-exporting P-type ATPase (780 aa).

The region spanning 2 to 67 (QRIQLNITGM…AVRRAALCTD (66 aa)) is the HMA domain. Residues cysteine 13 and cysteine 16 each coordinate Cu(+). A run of 6 helical transmembrane segments spans residues 89–109 (LAVA…FAVL), 114–134 (FPGW…WAAW), 153–173 (TLIS…VFGH), 185–205 (ALLG…VFVL), 348–368 (VFVP…LIAG), and 374–394 (VFSA…GLAT). The active-site 4-aspartylphosphate intermediate is aspartate 430. 2 helical membrane passes run 680 to 698 (FNMV…IAAA) and 704 to 722 (LVAG…SNSL).

Belongs to the cation transport ATPase (P-type) (TC 3.A.3) family. Type IB subfamily.

It localises to the cell membrane. The catalysed reaction is Cu(+)(in) + ATP + H2O = Cu(+)(out) + ADP + phosphate + H(+). Functionally, involved in copper export. The polypeptide is Copper-exporting P-type ATPase (ctpA) (Mycobacterium leprae (strain TN)).